The following is a 286-amino-acid chain: Acetyl-coenzyme A carboxylase carboxyl transferase subunit beta (286 aa).

The region spanning 26–286 (LWEKCVKCDA…LAKFTRRAAV (261 aa)) is the CoA carboxyltransferase N-terminal domain. Residues cysteine 30, cysteine 33, cysteine 49, and cysteine 52 each coordinate Zn(2+). Residues 30-52 (CVKCDAVLYKPELEKNLDVCPKC) form a C4-type zinc finger.

The protein belongs to the AccD/PCCB family. Acetyl-CoA carboxylase is a heterohexamer composed of biotin carboxyl carrier protein (AccB), biotin carboxylase (AccC) and two subunits each of ACCase subunit alpha (AccA) and ACCase subunit beta (AccD). It depends on Zn(2+) as a cofactor.

The protein localises to the cytoplasm. It carries out the reaction N(6)-carboxybiotinyl-L-lysyl-[protein] + acetyl-CoA = N(6)-biotinyl-L-lysyl-[protein] + malonyl-CoA. Its pathway is lipid metabolism; malonyl-CoA biosynthesis; malonyl-CoA from acetyl-CoA: step 1/1. Its function is as follows. Component of the acetyl coenzyme A carboxylase (ACC) complex. Biotin carboxylase (BC) catalyzes the carboxylation of biotin on its carrier protein (BCCP) and then the CO(2) group is transferred by the transcarboxylase to acetyl-CoA to form malonyl-CoA. This is Acetyl-coenzyme A carboxylase carboxyl transferase subunit beta from Cellvibrio japonicus (strain Ueda107) (Pseudomonas fluorescens subsp. cellulosa).